We begin with the raw amino-acid sequence, 584 residues long: MVQKMLTSRGLFLILTMLNLSQVPSIMGEQRWAILSTFPKPMPVRHDAIVFPKFFTTNKTVDLPYLLYDPTAPLGENRSLLEQGSLCFQINGPGNCINLTARALGKFNEHRGWVSTTQDTSNVEITFTNRTFWQEVNWVNGTFLPPNFSDKEHLHQPKIAPHCSLEDEGLILPWSDCQSSIIRWVDQSKTFSFSPNMIDDPEKEFVMKKGLFIQDFRMHPFHKWVLCGVNGSCTELNPLIFIQGGAVGKASFTGISRFAQYWGIHDASQDSYGYTNTSVEITGFNKTLVNQINYPSTPVCVYPPFLFILSNDSFEVCSNDSCWISQCWDVTKNTRAMVARIPRWIPVPVETPSTLSMFRQKRDFGITAAMIIAISASAAAATAAGYAMVSAVSGTKLNQLSADLADAITVQTSASTKLKGGLMILNQCLDLAEEQIGVLHQMAQLGCERKLEALCITSVQYENFTYAANLSRQLSLYLAGNWSERFDETLEALIAAVLKINSTRMDLSLTEGLSSWISSAFSYFKEWVGVGLFGVATCCGLVVMLWLVCKLRTQQTRDKVVITQALAAIEQGASPEIWLSMLKN.

Residues 1-28 form the signal peptide; the sequence is MVQKMLTSRGLFLILTMLNLSQVPSIMG. Residues 29–527 are Extracellular-facing; that stretch reads EQRWAILSTF…SSAFSYFKEW (499 aa). Asn58, Asn77, Asn98, Asn129, Asn140, Asn147, Asn230, Asn276, Asn285, Asn311, and Asn319 each carry an N-linked (GlcNAc...) asparagine; by host glycan. The segment at 364-384 is fusion peptide; it reads FGITAAMIIAISASAAAATAA. A coiled-coil region spans residues 391–441; the sequence is AVSGTKLNQLSADLADAITVQTSASTKLKGGLMILNQCLDLAEEQIGVLHQ. 4 N-linked (GlcNAc...) asparagine; by host glycosylation sites follow: Asn463, Asn469, Asn481, and Asn501. Residues 477 to 513 adopt a coiled-coil conformation; sequence YLAGNWSERFDETLEALIAAVLKINSTRMDLSLTEGL. The helical transmembrane segment at 528–548 threads the bilayer; the sequence is VGVGLFGVATCCGLVVMLWLV. Topologically, residues 549 to 584 are cytoplasmic; sequence CKLRTQQTRDKVVITQALAAIEQGASPEIWLSMLKN.

As to quaternary structure, the mature envelope protein (Env) consists of a trimer of SU-TM heterodimers attached by noncovalent interactions or by a labile interchain disulfide bond. In terms of processing, specific enzymatic cleavages in vivo yield mature proteins. Envelope glycoproteins are synthesized as an inactive precursor that is N-glycosylated and processed likely by host cell furin or by a furin-like protease in the Golgi to yield the mature SU and TM proteins. The cleavage site between SU and TM requires the minimal sequence [KR]-X-[KR]-R.

The protein resides in the virion membrane. It localises to the host cell membrane. In terms of biological role, the surface protein (SU) attaches the virus to the host cell by binding to its receptor. This interaction triggers the refolding of the transmembrane protein (TM) and is thought to activate its fusogenic potential by unmasking its fusion peptide. Fusion occurs at the host cell plasma membrane. Its function is as follows. The transmembrane protein (TM) acts as a class I viral fusion protein. Under the current model, the protein has at least 3 conformational states: pre-fusion native state, pre-hairpin intermediate state, and post-fusion hairpin state. During viral and target cell membrane fusion, the coiled coil regions (heptad repeats) assume a trimer-of-hairpins structure, positioning the fusion peptide in close proximity to the C-terminal region of the ectodomain. The formation of this structure appears to drive apposition and subsequent fusion of viral and target cell membranes. Membranes fusion leads to delivery of the nucleocapsid into the cytoplasm. In Mus musculus (Mouse), this protein is Envelope glycoprotein (env).